The sequence spans 328 residues: Ketol-acid reductoisomerase (NADP(+)) (328 aa).

One can recognise a KARI N-terminal Rossmann domain in the interval 2-182 (AKIYRDVDAS…GATRAGVIET (181 aa)). Residues 25-28 (YGIQ), arginine 48, serine 53, and 83-86 (DMEQ) contribute to the NADP(+) site. Histidine 108 is an active-site residue. Glycine 134 is a binding site for NADP(+). Residues 183 to 328 (TFAEETETDL…IEMRRLLFGQ (146 aa)) enclose the KARI C-terminal knotted domain. Residues aspartate 191, glutamate 195, glutamate 227, and glutamate 231 each coordinate Mg(2+). Serine 252 contributes to the substrate binding site.

It belongs to the ketol-acid reductoisomerase family. Mg(2+) is required as a cofactor.

It catalyses the reaction (2R)-2,3-dihydroxy-3-methylbutanoate + NADP(+) = (2S)-2-acetolactate + NADPH + H(+). It carries out the reaction (2R,3R)-2,3-dihydroxy-3-methylpentanoate + NADP(+) = (S)-2-ethyl-2-hydroxy-3-oxobutanoate + NADPH + H(+). The protein operates within amino-acid biosynthesis; L-isoleucine biosynthesis; L-isoleucine from 2-oxobutanoate: step 2/4. It participates in amino-acid biosynthesis; L-valine biosynthesis; L-valine from pyruvate: step 2/4. Its function is as follows. Involved in the biosynthesis of branched-chain amino acids (BCAA). Catalyzes an alkyl-migration followed by a ketol-acid reduction of (S)-2-acetolactate (S2AL) to yield (R)-2,3-dihydroxy-isovalerate. In the isomerase reaction, S2AL is rearranged via a Mg-dependent methyl migration to produce 3-hydroxy-3-methyl-2-ketobutyrate (HMKB). In the reductase reaction, this 2-ketoacid undergoes a metal-dependent reduction by NADPH to yield (R)-2,3-dihydroxy-isovalerate. The polypeptide is Ketol-acid reductoisomerase (NADP(+)) (Pyrobaculum arsenaticum (strain DSM 13514 / JCM 11321 / PZ6)).